Here is a 282-residue protein sequence, read N- to C-terminus: Pantothenate synthetase (282 aa).

ATP is bound at residue 30-37; it reads MGALHAGH. Histidine 37 serves as the catalytic Proton donor. Residue glutamine 61 participates in (R)-pantoate binding. Beta-alanine is bound at residue glutamine 61. 147–150 is a binding site for ATP; that stretch reads GEKD. Residue glutamine 153 coordinates (R)-pantoate. ATP-binding positions include valine 176 and 184-187; that span reads LSSR.

The protein belongs to the pantothenate synthetase family. Homodimer.

It localises to the cytoplasm. It carries out the reaction (R)-pantoate + beta-alanine + ATP = (R)-pantothenate + AMP + diphosphate + H(+). It participates in cofactor biosynthesis; (R)-pantothenate biosynthesis; (R)-pantothenate from (R)-pantoate and beta-alanine: step 1/1. Its function is as follows. Catalyzes the condensation of pantoate with beta-alanine in an ATP-dependent reaction via a pantoyl-adenylate intermediate. In Bacteroides thetaiotaomicron (strain ATCC 29148 / DSM 2079 / JCM 5827 / CCUG 10774 / NCTC 10582 / VPI-5482 / E50), this protein is Pantothenate synthetase.